We begin with the raw amino-acid sequence, 340 residues long: Major histocompatibility complex class I-related gene protein (340 aa).

A signal peptide spans 1–22; that stretch reads MGELMAFLLPLIIVLMVKHSNS. An alpha-1 region spans residues 23 to 109; the sequence is RTHSLRYFRL…KRLQRHYNHS (87 aa). The tract at residues 23–201 is antigen-binding cleft; it reads RTHSLRYFRL…EYGKDTLQRT (179 aa). Topologically, residues 23-302 are extracellular; the sequence is RTHSLRYFRL…QESEAIPLVM (280 aa). Tyrosine 29 and arginine 31 together coordinate 8-(9H-purin-6-yl)-2-oxa-8-azabicyclo[3.3.1]nona-3,6-diene-4,6-dicarbaldehyde. Residues arginine 31, serine 46, and lysine 65 each contribute to the 5-(2-oxoethylideneamino)-6-(D-ribitylamino)uracil site. Residues arginine 31, serine 46, and lysine 65 each coordinate 5-(2-oxopropylideneamino)-6-(D-ribitylamino)uracil. Arginine 31, serine 46, and lysine 65 together coordinate 7-hydroxy-6-methyl-8-(1-D-ribityl)lumazine. 2 residues coordinate 8-(9H-purin-6-yl)-2-oxa-8-azabicyclo[3.3.1]nona-3,6-diene-4,6-dicarbaldehyde: lysine 65 and histidine 80. Lysine 65 lines the 2-amino-4-oxopteridine-6-carbaldehyde pocket. Lysine 65 is a pyridoxal binding site. Residue asparagine 107 is glycosylated (N-linked (GlcNAc...) asparagine). The segment at 110–201 is alpha-2; that stretch reads GSHTYQRMIG…EYGKDTLQRT (92 aa). Residue arginine 116 participates in 8-(9H-purin-6-yl)-2-oxa-8-azabicyclo[3.3.1]nona-3,6-diene-4,6-dicarbaldehyde binding. Residues arginine 116, tyrosine 174, and glutamine 175 each contribute to the 5-(2-oxoethylideneamino)-6-(D-ribitylamino)uracil site. 5-(2-oxopropylideneamino)-6-(D-ribitylamino)uracil is bound by residues arginine 116, tyrosine 174, and glutamine 175. Arginine 116, tyrosine 174, and glutamine 175 together coordinate 7-hydroxy-6-methyl-8-(1-D-ribityl)lumazine. Intrachain disulfides connect cysteine 120/cysteine 183 and cysteine 222/cysteine 278. The tract at residues 202 to 293 is alpha-3; sequence EPPLVRVNRK…GVHMVLQVPQ (92 aa). Positions 203–282 constitute an Ig-like C1-type domain; the sequence is PPLVRVNRKE…SNLYSCHVEH (80 aa). The tract at residues 294–302 is connecting peptide; that stretch reads ESEAIPLVM. A helical transmembrane segment spans residues 303–323; that stretch reads KAVSGSIVFVIVLTGVGVLVW. Residues 324-340 are Cytoplasmic-facing; the sequence is RRRPREQNGAVYLPTPD.

Belongs to the MHC class I family. Heterotrimer that consists of MR1, B2M and metabolite antigen. Major classes of metabolite ligands presented by MR1 include riboflavin-related antigens, pyrimidines and ribityl lumazines, nucleobase adducts and folate derivatives. Forms reversible covalent Schiff base complexes with microbial pyrimidine-based metabolite, which serves as a molecular switch triggering complete folding, stable association with B2M and translocation of the ternary complex from endoplasmic reticulum to the plasma membrane. Alternatively, forms non-Schiff base complexes with ribityl lumazines. On antigen-presenting cells, the ternary complex interacts with TCR on MR1-restricted T cells. Interacts with TAPBP and TAPBPL chaperones in the endoplasmic reticulum. TAPBP associated or not with MHC class I peptide loading complex binds ligand-free MR1 or MR1-B2M complex, providing for stable MR1 pools ready for metabolite antigen processing. TAPBPL interacts with MR1 in a ligand-independent way; this interaction may stabilize MR1 pool and facilitate ligand loading and dissociation. Structurally, MR1-B2M heterodimer adopts a topology similar to classical MHC class I molecules, with alpha-1 and alpha-2 domains of MR1 forming the antigen-binding cleft composed of two alpha-helices resting on a floor of 7-stranded anti-parallel beta-pleated sheet. MR1-B2M heterodimer (via alpha-helices) interacts with TCR (via CDR domains). In terms of processing, N-glycosylated.

The protein resides in the cell membrane. It localises to the endoplasmic reticulum membrane. It is found in the golgi apparatus membrane. Its subcellular location is the early endosome membrane. The protein localises to the late endosome membrane. Functionally, antigen-presenting molecule specialized in displaying microbial pyrimidine-based metabolites to alpha-beta T cell receptors (TCR) on innate-type mucosal-associated invariant T (MAIT) cells. In complex with B2M preferentially presents riboflavin-derived metabolites to semi-invariant TCRs on MAIT cells, guiding immune surveillance of the microbial metabolome at mucosal epithelial barriers. Signature pyrimidine-based microbial antigens are generated via non-enzymatic condensation of metabolite intermediates of the riboflavin pathway with by-products arising from other metabolic pathways such as glycolysis. Typical potent antigenic metabolites are 5-(2-oxoethylideneamino)-6-D-ribitylaminouracil (5-OE-RU) and 5-(2-oxopropylideneamino)-6-D-ribitylaminouracil (5-OP-RU), products of condensation of 5-amino-6-D-ribityaminouracil (5-A-RU) with glyoxal or methylglyoxal by-products, respectively. May present microbial antigens to various MAIT cell subsets, providing for unique recognition of diverse microbes, including pathogens that do not synthesize riboflavin. Upon antigen recognition, elicits rapid innate-type MAIT cell activation to eliminate pathogenic microbes by directly killing infected cells. During T cell development, drives thymic selection and post-thymic terminal differentiation of MAIT cells in a process dependent on commensal microflora. Acts as an immune sensor of cancer cell metabolome. May present a tumor-specific or -associated metabolite essential for cancer cell survival to a pan-cancer TCR on a non-MAIT CD8-positive T cell clone, triggering T cell-mediated killing of a wide range of cancer cell types. May present tumor-enriched pyridoxal and pyridoxal 5'-phosphate antigens, enabling preferential recognition of cancer cells. Presents nucleobase carbonyl adducts generated during oxidative stress. Captures M3Ade, a nucleobase adduct composed of one adenine modified by a malondialdehyde trimer, for recognition by MR1-restricted T cell clones expressing a polyclonal TCR repertoire. The sequence is that of Major histocompatibility complex class I-related gene protein from Pongo pygmaeus (Bornean orangutan).